A 400-amino-acid polypeptide reads, in one-letter code: Acetate kinase (400 aa).

Mg(2+) is bound at residue Asn-7. Position 14 (Lys-14) interacts with ATP. Arg-85 contacts substrate. Catalysis depends on Asp-142, which acts as the Proton donor/acceptor. ATP is bound by residues 202 to 206 (HLGNG), 278 to 280 (DMR), and 326 to 330 (GIGEN). A Mg(2+)-binding site is contributed by Glu-380.

It belongs to the acetokinase family. In terms of assembly, homodimer. Requires Mg(2+) as cofactor. Mn(2+) serves as cofactor.

The protein resides in the cytoplasm. It carries out the reaction acetate + ATP = acetyl phosphate + ADP. The protein operates within metabolic intermediate biosynthesis; acetyl-CoA biosynthesis; acetyl-CoA from acetate: step 1/2. In terms of biological role, catalyzes the formation of acetyl phosphate from acetate and ATP. Can also catalyze the reverse reaction. The protein is Acetate kinase of Deinococcus deserti (strain DSM 17065 / CIP 109153 / LMG 22923 / VCD115).